Consider the following 232-residue polypeptide: Phosphoribosylformylglycinamidine synthase subunit PurQ (232 aa).

Residues 3-232 (FAVIVFPGSN…SLVASALAVV (230 aa)) form the Glutamine amidotransferase type-1 domain. Cys86 acts as the Nucleophile in catalysis. Active-site residues include His203 and Glu205.

Part of the FGAM synthase complex composed of 1 PurL, 1 PurQ and 2 PurS subunits.

The protein resides in the cytoplasm. It catalyses the reaction N(2)-formyl-N(1)-(5-phospho-beta-D-ribosyl)glycinamide + L-glutamine + ATP + H2O = 2-formamido-N(1)-(5-O-phospho-beta-D-ribosyl)acetamidine + L-glutamate + ADP + phosphate + H(+). It carries out the reaction L-glutamine + H2O = L-glutamate + NH4(+). Its pathway is purine metabolism; IMP biosynthesis via de novo pathway; 5-amino-1-(5-phospho-D-ribosyl)imidazole from N(2)-formyl-N(1)-(5-phospho-D-ribosyl)glycinamide: step 1/2. In terms of biological role, part of the phosphoribosylformylglycinamidine synthase complex involved in the purines biosynthetic pathway. Catalyzes the ATP-dependent conversion of formylglycinamide ribonucleotide (FGAR) and glutamine to yield formylglycinamidine ribonucleotide (FGAM) and glutamate. The FGAM synthase complex is composed of three subunits. PurQ produces an ammonia molecule by converting glutamine to glutamate. PurL transfers the ammonia molecule to FGAR to form FGAM in an ATP-dependent manner. PurS interacts with PurQ and PurL and is thought to assist in the transfer of the ammonia molecule from PurQ to PurL. The protein is Phosphoribosylformylglycinamidine synthase subunit PurQ of Gloeobacter violaceus (strain ATCC 29082 / PCC 7421).